Reading from the N-terminus, the 266-residue chain is Thymidylate synthase (266 aa).

Arg-24 serves as a coordination point for dUMP. His-54 provides a ligand contact to (6R)-5,10-methylene-5,6,7,8-tetrahydrofolate. Arg-129–Arg-130 provides a ligand contact to dUMP. The Nucleophile role is filled by Cys-149. DUMP-binding positions include Arg-169–Asp-172, Asn-180, and His-210–Tyr-212. Asp-172 is a (6R)-5,10-methylene-5,6,7,8-tetrahydrofolate binding site. Ala-265 provides a ligand contact to (6R)-5,10-methylene-5,6,7,8-tetrahydrofolate.

The protein belongs to the thymidylate synthase family. Bacterial-type ThyA subfamily. As to quaternary structure, homodimer.

The protein resides in the cytoplasm. The enzyme catalyses dUMP + (6R)-5,10-methylene-5,6,7,8-tetrahydrofolate = 7,8-dihydrofolate + dTMP. It participates in pyrimidine metabolism; dTTP biosynthesis. Its function is as follows. Catalyzes the reductive methylation of 2'-deoxyuridine-5'-monophosphate (dUMP) to 2'-deoxythymidine-5'-monophosphate (dTMP) while utilizing 5,10-methylenetetrahydrofolate (mTHF) as the methyl donor and reductant in the reaction, yielding dihydrofolate (DHF) as a by-product. This enzymatic reaction provides an intracellular de novo source of dTMP, an essential precursor for DNA biosynthesis. The polypeptide is Thymidylate synthase (Mycobacterium sp. (strain KMS)).